The primary structure comprises 337 residues: MSRVTLSRYLIEQTRSHNTPADLRFLIEVVARACKEISHAVSKGALGGVLGSMGTENVQGEVQKKLDVMSNEILLEANEWGGHLAGMASEEMDSAYQIPGKYPKGAYLLVFDPLDGSSNIDVNVSVGTIFSVLRCPDQYLTQNDSLNEQAFLQPGTQQVAAGYAIYGPQTMLMLTLGNGVKGFTLDRELGSFVLTHDNLCVPETTAEFAINMSNQRHWEPPVKRYVDELLAGKTGPLDKDYNMRWIASMVADVHRILTRGGIFMYPRDAREPSKPGKLRLMYEANPMSFIIEQAGGAATNGTQRILDIQPESLHQRVAVFLGSKAEVERITDYHLEG.

Residues glutamate 90, aspartate 112, leucine 114, and aspartate 115 each coordinate Mg(2+). Residues 115–118, asparagine 211, and lysine 277 each bind substrate; that span reads DGSS. Glutamate 283 contacts Mg(2+).

The protein belongs to the FBPase class 1 family. In terms of assembly, homotetramer. Mg(2+) is required as a cofactor.

The protein resides in the cytoplasm. It carries out the reaction beta-D-fructose 1,6-bisphosphate + H2O = beta-D-fructose 6-phosphate + phosphate. It functions in the pathway carbohydrate biosynthesis; gluconeogenesis. The chain is Fructose-1,6-bisphosphatase class 1 from Azotobacter vinelandii (strain DJ / ATCC BAA-1303).